The chain runs to 266 residues: Cell division cycle-associated protein 3 (266 aa).

Residues 1-84 (MGSTQSVSGT…TPMKISGPDP (84 aa)) are disordered. Ser-29 and Ser-31 each carry phosphoserine. Positions 32-46 (AGIQRTPIQVESSPQ) are enriched in polar residues. A Phosphothreonine modification is found at Thr-37. 2 positions are modified to phosphoserine: Ser-44 and Ser-67. The residue at position 75 (Thr-75) is a Phosphothreonine. The interval 90-119 (KELSEVLETEASESISSPELALPRETPLFY) is F-box-like. Ser-93 carries the post-translational modification Phosphoserine. Disordered stretches follow at residues 120–225 (DLDL…LSEN) and 242–266 (KAGG…LLES). Residues 143–156 (LDPKQVFTKEEAKQ) are compositionally biased toward basic and acidic residues. A compositionally biased stretch (polar residues) spans 157–168 (SAETIAASQNSD). At Ser-197 the chain carries Phosphoserine. Thr-200 is modified (phosphothreonine). A compositionally biased stretch (polar residues) spans 203-213 (QDDNSPGTLTL). Ser-207 carries the phosphoserine modification. A Phosphothreonine modification is found at Thr-210. Basic and acidic residues predominate over residues 250–259 (PNQDHDKENQ). The KEN box motif lies at 256-258 (KEN).

As to quaternary structure, interacts with SKP1. Part of a SCF (SKP1-cullin-F-box) protein ligase complex. In terms of processing, ubiquitinated and degraded by the APC/C-Cdh1 complex.

The protein resides in the cytoplasm. Its subcellular location is the cytosol. The protein operates within protein modification; protein ubiquitination. Its function is as follows. F-box-like protein which is required for entry into mitosis. Acts by participating in E3 ligase complexes that mediate the ubiquitination and degradation of WEE1 kinase at G2/M phase. This Mus musculus (Mouse) protein is Cell division cycle-associated protein 3 (Cdca3).